The sequence spans 534 residues: Glucans biosynthesis protein D (534 aa).

Positions 1–26 (MQRRDFIRNASLALAAFGLPSLPACA) form a signal peptide, tat-type signal.

It belongs to the OpgD/OpgG family. In terms of processing, predicted to be exported by the Tat system. The position of the signal peptide cleavage has not been experimentally proven.

It is found in the periplasm. The protein operates within glycan metabolism; osmoregulated periplasmic glucan (OPG) biosynthesis. In terms of biological role, probably involved in the control of the structural glucose backbone of osmoregulated periplasmic glucans (OPGs). In Stenotrophomonas maltophilia (strain K279a), this protein is Glucans biosynthesis protein D.